A 92-amino-acid chain; its full sequence is Small ribosomal subunit protein uS19 (92 aa).

It belongs to the universal ribosomal protein uS19 family.

Its function is as follows. Protein S19 forms a complex with S13 that binds strongly to the 16S ribosomal RNA. This chain is Small ribosomal subunit protein uS19, found in Staphylococcus carnosus (strain TM300).